Reading from the N-terminus, the 388-residue chain is Xylose isomerase (388 aa).

Catalysis depends on residues His-54 and Asp-57. Residues Glu-181, Glu-217, His-220, Asp-245, Asp-255, Asp-257, and Asp-287 each coordinate Mg(2+).

This sequence belongs to the xylose isomerase family. In terms of assembly, homotetramer. Mg(2+) serves as cofactor.

It is found in the cytoplasm. It catalyses the reaction alpha-D-xylose = alpha-D-xylulofuranose. The polypeptide is Xylose isomerase (Streptomyces olivaceoviridis (Streptomyces corchorusii)).